The following is a 182-amino-acid chain: Keratin, type II cytoskeletal 68 kDa, component IA (182 aa).

The region spanning 1–66 is the IF rod domain; the sequence is DAEQHGEVAL…TLLEGEECRM (66 aa). Positions 1–66 are coil 2B; the sequence is DAEQHGEVAL…TLLEGEECRM (66 aa). The H2 subdomain stretch occupies residues 67–86; the sequence is SGECQSSVSIEMVHNTTSSS. The tail stretch occupies residues 67–182; the sequence is SGECQSSVSI…SQSQRSHHKL (116 aa). The interval 87 to 162 is V2 subdomain; sequence SGGSGALGGG…GSCAVSGVGG (76 aa). Positions 104–124 are enriched in gly residues; it reads GSGGLGSGSLGSGRLGSGGRG. The segment at 104 to 182 is disordered; sequence GSGGLGSGSL…SQSQRSHHKL (79 aa). Low complexity-rich tracts occupy residues 144 to 158 and 165 to 176; these read VRGSVSNSGGSCAVS and SVRVTQSSSQSQ. The segment at 163–182 is E2 subdomain; the sequence is RGSVRVTQSSSQSQRSHHKL.

Belongs to the intermediate filament family. Heterotetramer of two type I and two type II keratins.

The sequence is that of Keratin, type II cytoskeletal 68 kDa, component IA from Bos taurus (Bovine).